The primary structure comprises 369 residues: Putative 2-aminoethylphosphonate import ATP-binding protein PhnT (369 aa).

The region spanning 19-250 is the ABC transporter domain; it reads IVLDSLRVAY…PPNRFASEFL (232 aa). An ATP-binding site is contributed by 51 to 58; it reads GPSGSGKT.

Belongs to the ABC transporter superfamily. 2-aminoethylphosphonate importer (TC 3.A.1.11.5) family.

The protein localises to the cell inner membrane. Functionally, probably part of the PhnSTUV complex (TC 3.A.1.11.5) involved in 2-aminoethylphosphonate import. Probably responsible for energy coupling to the transport system. The chain is Putative 2-aminoethylphosphonate import ATP-binding protein PhnT (phnT) from Salmonella choleraesuis (strain SC-B67).